A 725-amino-acid polypeptide reads, in one-letter code: A-agglutinin anchorage subunit (725 aa).

The first 24 residues, 1 to 24 (MTLSFAHFTYLFTILLGLTNIALA), serve as a signal peptide directing secretion. 19 repeat units span residues 53–149 (VSTS…EVGT), 182–188 (TTTSLSS), 189–195 (TSTSPSS), 196–202 (TSTSPSS), 203–209 (TSTSSSS), 210–216 (TSTSSSS), 217–223 (TSTSSSS), 224–230 (TSTSPSS), 231–237 (TSTSSSL), 238–244 (TSTSSSS), 245–251 (TSTSQSS), 252–258 (TSTSSSS), 259–265 (TSTSPSS), 266–272 (TSTSSSS), 273–279 (TSTSPSS), 280–286 (KSTSASS), 287–293 (TSTSSYS), 294–300 (TSTSPSL), and 301–307 (TSSSPTL). The 2 X approximate repeats stretch occupies residues 53-493 (VSTSTIVQAG…TSHSYSSVQT (441 aa)). Disordered regions lie at residues 168–318 (PVTS…TSIS) and 335–363 (SSTS…TPSM). Residues 182-307 (TTTSLSSTST…PSLTSSSPTL (126 aa)) form an 18 X approximate tandem repeats, Ser/Thr-rich region. The stretch at 395–493 (MSTYFTTVSG…TSHSYSSVQT (99 aa)) is one 1-2 repeat. The GPI-anchor amidated glycine moiety is linked to residue Gly699. Residues 700–725 (SGSQTRLPLGKLVFAIMAVACNVIFS) constitute a propeptide, removed in mature form.

In terms of assembly, heterodimer; disulfide-linked. Post-translationally, extensively O-glycosylated by PMT1 and PMT2. The GPI-anchor is attached to the protein in the endoplasmic reticulum and serves to target the protein to the cell surface. There, the glucosamine-inositol phospholipid moiety is cleaved off and the GPI-modified mannoprotein is covalently attached via its lipidless GPI glycan remnant to the 1,6-beta-glucan of the outer cell wall layer.

It localises to the secreted. The protein localises to the cell wall. It is found in the membrane. In terms of biological role, cell wall anchoring subunit of the a-agglutinin heterodimer. S.cerevisiae a and alpha cells express the complementary cell surface glycoproteins a-agglutinin and alpha-agglutinin, respectively, which interact with one another to promote cellular aggregation during mating. This Saccharomyces cerevisiae (strain ATCC 204508 / S288c) (Baker's yeast) protein is A-agglutinin anchorage subunit (AGA1).